The chain runs to 487 residues: N-succinylglutamate 5-semialdehyde dehydrogenase (487 aa).

Position 221-226 (221-226) interacts with NAD(+); it reads GSSDTG. Active-site residues include Glu244 and Cys278.

It belongs to the aldehyde dehydrogenase family. AstD subfamily.

It catalyses the reaction N-succinyl-L-glutamate 5-semialdehyde + NAD(+) + H2O = N-succinyl-L-glutamate + NADH + 2 H(+). It functions in the pathway amino-acid degradation; L-arginine degradation via AST pathway; L-glutamate and succinate from L-arginine: step 4/5. Its function is as follows. Catalyzes the NAD-dependent reduction of succinylglutamate semialdehyde into succinylglutamate. This chain is N-succinylglutamate 5-semialdehyde dehydrogenase, found in Burkholderia vietnamiensis (strain G4 / LMG 22486) (Burkholderia cepacia (strain R1808)).